We begin with the raw amino-acid sequence, 75 residues long: Small ribosomal subunit protein bS18c (75 aa).

Belongs to the bacterial ribosomal protein bS18 family. In terms of assembly, part of the 30S ribosomal subunit.

It is found in the plastid. The protein localises to the chloroplast. The polypeptide is Small ribosomal subunit protein bS18c (rps18) (Anthoceros angustus (Hornwort)).